Consider the following 642-residue polypeptide: Threonine--tRNA ligase (642 aa).

The TGS domain occupies 1-61 (MPVITLPDGS…ENDATLSIIT (61 aa)). The interval 243-534 (DHRKIGKQLD…LTEEFAGFFP (292 aa)) is catalytic. The Zn(2+) site is built by C334, H385, and H511.

This sequence belongs to the class-II aminoacyl-tRNA synthetase family. In terms of assembly, homodimer. The cofactor is Zn(2+).

It is found in the cytoplasm. It catalyses the reaction tRNA(Thr) + L-threonine + ATP = L-threonyl-tRNA(Thr) + AMP + diphosphate + H(+). In terms of biological role, catalyzes the attachment of threonine to tRNA(Thr) in a two-step reaction: L-threonine is first activated by ATP to form Thr-AMP and then transferred to the acceptor end of tRNA(Thr). Also edits incorrectly charged L-seryl-tRNA(Thr). The sequence is that of Threonine--tRNA ligase from Salmonella agona (strain SL483).